We begin with the raw amino-acid sequence, 562 residues long: Arginine--tRNA ligase (562 aa).

Residues 136–146 (ANPTGPMHMGN) carry the 'HIGH' region motif.

This sequence belongs to the class-I aminoacyl-tRNA synthetase family. In terms of assembly, monomer.

It localises to the cytoplasm. It catalyses the reaction tRNA(Arg) + L-arginine + ATP = L-arginyl-tRNA(Arg) + AMP + diphosphate. This Caldanaerobacter subterraneus subsp. tengcongensis (strain DSM 15242 / JCM 11007 / NBRC 100824 / MB4) (Thermoanaerobacter tengcongensis) protein is Arginine--tRNA ligase (argS).